A 258-amino-acid chain; its full sequence is Imidazole glycerol phosphate synthase subunit HisF (258 aa).

Catalysis depends on residues D11 and D130.

The protein belongs to the HisA/HisF family. In terms of assembly, heterodimer of HisH and HisF.

It is found in the cytoplasm. The catalysed reaction is 5-[(5-phospho-1-deoxy-D-ribulos-1-ylimino)methylamino]-1-(5-phospho-beta-D-ribosyl)imidazole-4-carboxamide + L-glutamine = D-erythro-1-(imidazol-4-yl)glycerol 3-phosphate + 5-amino-1-(5-phospho-beta-D-ribosyl)imidazole-4-carboxamide + L-glutamate + H(+). Its pathway is amino-acid biosynthesis; L-histidine biosynthesis; L-histidine from 5-phospho-alpha-D-ribose 1-diphosphate: step 5/9. Its function is as follows. IGPS catalyzes the conversion of PRFAR and glutamine to IGP, AICAR and glutamate. The HisF subunit catalyzes the cyclization activity that produces IGP and AICAR from PRFAR using the ammonia provided by the HisH subunit. The polypeptide is Imidazole glycerol phosphate synthase subunit HisF (Serratia proteamaculans (strain 568)).